The following is a 503-amino-acid chain: Trehalose-6-phosphate synthase (503 aa).

Polar residues predominate over residues 1 to 14 (MTDQSGNGVRSGSA). The interval 1 to 20 (MTDQSGNGVRSGSASEAPPS) is disordered. A D-glucose 6-phosphate-binding site is contributed by arginine 31. 51 to 52 (GG) serves as a coordination point for UDP-alpha-D-glucose. D-glucose 6-phosphate is bound by residues tyrosine 109 and aspartate 163. Residues arginine 305 and lysine 310 each contribute to the UDP-alpha-D-glucose site. A D-glucose 6-phosphate-binding site is contributed by arginine 343. 408–412 (LVAKE) contacts UDP-alpha-D-glucose.

This sequence belongs to the glycosyltransferase 20 family. In terms of assembly, homotetramer.

It catalyses the reaction ADP-alpha-D-glucose + D-glucose 6-phosphate = alpha,alpha-trehalose 6-phosphate + ADP + H(+). It carries out the reaction CDP-alpha-D-glucose + D-glucose 6-phosphate = alpha,alpha-trehalose 6-phosphate + CDP + H(+). The enzyme catalyses GDP-alpha-D-glucose + D-glucose 6-phosphate = alpha,alpha-trehalose 6-phosphate + GDP + H(+). The catalysed reaction is TDP-alpha-D-glucose + D-glucose 6-phosphate = 5-methyl-UDP + alpha,alpha-trehalose 6-phosphate + H(+). It catalyses the reaction D-glucose 6-phosphate + UDP-alpha-D-glucose = alpha,alpha-trehalose 6-phosphate + UDP + H(+). The protein operates within glycan biosynthesis; trehalose biosynthesis. In terms of biological role, probably involved in the osmoprotection via the biosynthesis of trehalose and in the production of glycogen and alpha-glucan via the TreS-Pep2 branch involved in the biosynthesis of maltose-1-phosphate (M1P). Catalyzes the transfer of glucose from UDP-glucose (UDP-Glc) to D-glucose 6-phosphate (Glc-6-P) to form trehalose-6-phosphate. Probably also able to use ADP-Glc, CDP-Glc, GDP-Glc and TDP-Glc as glucosyl donors. In Mycolicibacterium gilvum (strain PYR-GCK) (Mycobacterium gilvum (strain PYR-GCK)), this protein is Trehalose-6-phosphate synthase.